A 144-amino-acid chain; its full sequence is Large ribosomal subunit protein uL16 (144 aa).

It belongs to the universal ribosomal protein uL16 family. As to quaternary structure, part of the 50S ribosomal subunit.

Functionally, binds 23S rRNA and is also seen to make contacts with the A and possibly P site tRNAs. This chain is Large ribosomal subunit protein uL16, found in Bacillus pumilus (strain SAFR-032).